Consider the following 555-residue polypeptide: Potassium-transporting ATPase potassium-binding subunit (555 aa).

10 helical membrane-spanning segments follow: residues I2 to I22, Q60 to F80, I130 to F150, V173 to T193, M246 to Y266, I278 to E298, A374 to V394, L412 to L432, L483 to L503, and G525 to L545.

Belongs to the KdpA family. In terms of assembly, the system is composed of three essential subunits: KdpA, KdpB and KdpC.

The protein localises to the cell membrane. Its function is as follows. Part of the high-affinity ATP-driven potassium transport (or Kdp) system, which catalyzes the hydrolysis of ATP coupled with the electrogenic transport of potassium into the cytoplasm. This subunit binds the extracellular potassium ions and delivers the ions to the membrane domain of KdpB through an intramembrane tunnel. The polypeptide is Potassium-transporting ATPase potassium-binding subunit (Bacillus cereus (strain AH820)).